Here is a 79-residue protein sequence, read N- to C-terminus: Translation initiation factor IF-1, chloroplastic (79 aa).

Residues 1–74 (MTRKNIDLIE…HRGRITFRLR (74 aa)) enclose the S1-like domain.

Belongs to the IF-1 family. Component of the 30S ribosomal translation pre-initiation complex which assembles on the 30S ribosome in the order IF-2 and IF-3, IF-1 and N-formylmethionyl-tRNA(fMet); mRNA recruitment can occur at any time during PIC assembly.

It localises to the plastid. The protein localises to the chloroplast. Functionally, one of the essential components for the initiation of protein synthesis. Stabilizes the binding of IF-2 and IF-3 on the 30S subunit to which N-formylmethionyl-tRNA(fMet) subsequently binds. Helps modulate mRNA selection, yielding the 30S pre-initiation complex (PIC). Upon addition of the 50S ribosomal subunit IF-1, IF-2 and IF-3 are released leaving the mature 70S translation initiation complex. The chain is Translation initiation factor IF-1, chloroplastic from Chlorella vulgaris (Green alga).